The sequence spans 145 residues: Small ribosomal subunit protein eS19 (145 aa).

The protein belongs to the eukaryotic ribosomal protein eS19 family. As to quaternary structure, component of the small ribosomal subunit.

Its subcellular location is the cytoplasm. The protein localises to the nucleus. Functionally, component of the small ribosomal subunit. The ribosome is a large ribonucleoprotein complex responsible for the synthesis of proteins in the cell. Required for pre-rRNA processing and maturation of 40S ribosomal subunits. This is Small ribosomal subunit protein eS19 (rps19) from Myxine glutinosa (Atlantic hagfish).